We begin with the raw amino-acid sequence, 323 residues long: Sphingolipid delta(4)-desaturase DES1 (323 aa).

2 consecutive transmembrane segments (helical) span residues 41 to 61 (YNLIWVVMLMVAAQLTAFYLV) and 68 to 88 (WVVFWAYVFGSCISHSMTLAI). The short motif at 89-93 (HEISH) is the Histidine box-1 element. The chain crosses the membrane as a helical span at residues 102–122 (AMWNRWFGIFANLPLGLPYSI). Positions 128 to 132 (HMDHH) match the Histidine box-2 motif. 3 consecutive transmembrane segments (helical) span residues 159–179 (KFIWIVLQPFFYAIRPLCINP), 185–205 (LEIINLLAQLFFDIVIYYLWG), and 209–229 (IFYMLAGSVLGLGLHPISGHF). The Histidine box-3 signature appears at 259-263 (HNEHH).

This sequence belongs to the fatty acid desaturase type 1 family. DEGS subfamily. In terms of assembly, interacts with RLBP1; the interaction increases synthesis of chromophore-precursors by DEGS1. In terms of tissue distribution, expressed in retina and retinal pigment epithelium by Mueller cells (at protein level).

Its subcellular location is the endoplasmic reticulum membrane. It carries out the reaction an N-acylsphinganine + 2 Fe(II)-[cytochrome b5] + O2 + 2 H(+) = an N-acylsphing-4-enine + 2 Fe(III)-[cytochrome b5] + 2 H2O. The enzyme catalyses all-trans-retinol = 11-cis-retinol. It catalyses the reaction all-trans-retinol = 9-cis-retinol. The catalysed reaction is all-trans-retinol = 13-cis-retinol. It carries out the reaction 11-cis-retinol = 13-cis-retinol. The enzyme catalyses 11-cis-retinol = 9-cis-retinol. Its function is as follows. Has sphingolipid-delta-4-desaturase activity. Converts D-erythro-sphinganine to D-erythro-sphingosine (E-sphing-4-enine). Catalyzes the equilibrium isomerization of retinols. The chain is Sphingolipid delta(4)-desaturase DES1 (DEGS1) from Gallus gallus (Chicken).